The primary structure comprises 604 residues: Cell division cycle protein CDT1 (604 aa).

The protein belongs to the Cdt1 family. In terms of assembly, associates with the MCM2-7 complex. Interacts with MCM2, ORC1, ORC2 and ORC6.

The protein resides in the cytoplasm. It is found in the nucleus. DNA replication licensing factor, required for pre-replication complex assembly. Faithful duplication of the genetic material requires 'once per cell cycle' DNA replication initiation and elongation. Central to this control is the tightly regulated formation of prereplicative complexes (preRCs) at future origins of DNA replication. Required for the recruitment of the MCM2-7 helicase complex to the replication origins. The polypeptide is Cell division cycle protein CDT1 (TAH11) (Saccharomyces cerevisiae (strain ATCC 204508 / S288c) (Baker's yeast)).